A 338-amino-acid polypeptide reads, in one-letter code: Malate dehydrogenase, mitochondrial (338 aa).

The N-terminal 24 residues, 1–24 (MLSALARPAGAALRRSFSTSXQNN), are a transit peptide targeting the mitochondrion. NAD(+) contacts are provided by residues 31 to 37 (GASGGIG) and Asp57. Ser33 is a glycosylation site (O-linked (GlcNAc) serine). Residues Lys78 and Lys91 each carry the N6-acetyllysine; alternate modification. 2 positions are modified to N6-succinyllysine; alternate: Lys78 and Lys91. Substrate-binding residues include Arg104 and Arg110. NAD(+)-binding positions include Asn117 and 140–142 (ISN). Asn142 serves as a coordination point for substrate. Lys165 carries the N6-acetyllysine modification. Arg176 is a binding site for substrate. At Lys185 the chain carries N6-acetyllysine; alternate. Residue Lys185 is modified to N6-succinyllysine; alternate. The active-site Proton acceptor is His200. N6-succinyllysine is present on Lys203. An N6-acetyllysine; alternate mark is found at Lys215 and Lys239. 2 positions are modified to N6-succinyllysine; alternate: Lys215 and Lys239. Lys239 is modified (N6-malonyllysine; alternate). Residue Ser246 is modified to Phosphoserine. Residue Met251 participates in NAD(+) binding. Lys269 carries the N6-succinyllysine modification. 5 positions are modified to N6-acetyllysine; alternate: Lys296, Lys301, Lys307, Lys314, and Lys324. Residues Lys296, Lys301, Lys307, Lys314, and Lys324 each carry the N6-succinyllysine; alternate modification. Position 307 is an N6-malonyllysine; alternate (Lys307). Ser326 bears the Phosphoserine mark. N6-acetyllysine; alternate occurs at positions 328, 329, and 335. The residue at position 328 (Lys328) is an N6-succinyllysine; alternate. Lys329 carries the N6-malonyllysine; alternate modification. Lys335 is subject to N6-succinyllysine; alternate.

Belongs to the LDH/MDH superfamily. MDH type 1 family. As to quaternary structure, homodimer. Acetylation is enhanced after treatment either with trichostin A (TCA) or with nicotinamide (NAM) with the appearance of tri- and tetraacetylations. Glucose also increases acetylation.

The protein localises to the mitochondrion matrix. It catalyses the reaction (S)-malate + NAD(+) = oxaloacetate + NADH + H(+). Its activity is regulated as follows. Enzyme activity is enhanced by acetylation. The polypeptide is Malate dehydrogenase, mitochondrial (MDH2) (Sus scrofa (Pig)).